A 250-amino-acid polypeptide reads, in one-letter code: Putative ABC transporter ATP-binding protein YjkB (250 aa).

The ABC transporter domain occupies 13 to 245; that stretch reads ISFRSVRKSY…PQHEAAKEFL (233 aa). ATP is bound at residue 49 to 56; that stretch reads GPSGSGKS.

Belongs to the ABC transporter superfamily.

This Bacillus subtilis (strain 168) protein is Putative ABC transporter ATP-binding protein YjkB (yjkB).